The following is a 456-amino-acid chain: tRNA(Ile)-lysidine synthase (456 aa).

27–32 (SGGVDS) serves as a coordination point for ATP.

It belongs to the tRNA(Ile)-lysidine synthase family.

It localises to the cytoplasm. It carries out the reaction cytidine(34) in tRNA(Ile2) + L-lysine + ATP = lysidine(34) in tRNA(Ile2) + AMP + diphosphate + H(+). Ligates lysine onto the cytidine present at position 34 of the AUA codon-specific tRNA(Ile) that contains the anticodon CAU, in an ATP-dependent manner. Cytidine is converted to lysidine, thus changing the amino acid specificity of the tRNA from methionine to isoleucine. In Vibrio atlanticus (strain LGP32) (Vibrio splendidus (strain Mel32)), this protein is tRNA(Ile)-lysidine synthase.